A 253-amino-acid polypeptide reads, in one-letter code: uncharacterized protein (253 aa).

S145 provides a ligand contact to substrate. The Proton acceptor role is filled by Y159.

The protein belongs to the short-chain dehydrogenases/reductases (SDR) family.

This is an uncharacterized protein from Mycobacterium tuberculosis (strain CDC 1551 / Oshkosh).